Here is a 398-residue protein sequence, read N- to C-terminus: Argininosuccinate synthase (398 aa).

Residue 10–18 coordinates ATP; the sequence is AYSGGLDTS. Tyr87 is a binding site for L-citrulline. Residue Gly117 participates in ATP binding. Residues Thr119, Asn123, and Asp124 each coordinate L-aspartate. Asn123 is a binding site for L-citrulline. Positions 127, 175, 260, and 272 each coordinate L-citrulline.

Belongs to the argininosuccinate synthase family. Type 1 subfamily. In terms of assembly, homotetramer.

The protein resides in the cytoplasm. The catalysed reaction is L-citrulline + L-aspartate + ATP = 2-(N(omega)-L-arginino)succinate + AMP + diphosphate + H(+). The protein operates within amino-acid biosynthesis; L-arginine biosynthesis; L-arginine from L-ornithine and carbamoyl phosphate: step 2/3. The chain is Argininosuccinate synthase from Lactococcus lactis subsp. lactis (strain IL1403) (Streptococcus lactis).